The chain runs to 895 residues: Probable methyltransferase PMT27 (895 aa).

The Cytoplasmic portion of the chain corresponds to 1–16 (MAFGRGRGNKRTSTSS). A helical; Signal-anchor for type II membrane protein membrane pass occupies residues 17–37 (YASTITMVIFVALCVFGVWML). Residues 38–895 (SSNSVIPPQI…KGFWRPETSQ (858 aa)) lie on the Lumenal side of the membrane. Positions 43–52 (IPPQITQGST) are enriched in polar residues. A disordered region spans residues 43–362 (IPPQITQGST…QRQTSESNTV (320 aa)). Basic and acidic residues predominate over residues 90 to 114 (NPGKLPDDAVKSEDEQRKSAKEKSE). The segment covering 115–127 (TTSSKTQTQETQQ) has biased composition (low complexity). Positions 129 to 143 (NDDKISEEKEKDNGK) are enriched in basic and acidic residues. Asn-145 carries an N-linked (GlcNAc...) asparagine glycan. The span at 154 to 174 (GQMKKVVKEFEKEQKQQRDED) shows a compositional bias: basic and acidic residues. Low complexity predominate over residues 176-191 (GTQPKGTQGQEQGQGK). 2 stretches are compositionally biased toward polar residues: residues 199–232 (GNKQ…GETS) and 243–256 (PEEQ…TGQQ). Over residues 257–320 (NEEKTTASEE…RKDEKKHEQG (64 aa)) the composition is skewed to basic and acidic residues. Polar residues predominate over residues 337–346 (SQKSWKSQAT). Residues Asn-375 and Asn-709 are each glycosylated (N-linked (GlcNAc...) asparagine).

The protein belongs to the methyltransferase superfamily.

The protein resides in the endoplasmic reticulum membrane. This is Probable methyltransferase PMT27 from Arabidopsis thaliana (Mouse-ear cress).